Consider the following 96-residue polypeptide: NADH-ubiquinone oxidoreductase chain 4L (96 aa).

Transmembrane regions (helical) follow at residues Ile2 to Val22, Leu28 to Ile48, and Met62 to Ile82.

This sequence belongs to the complex I subunit 4L family.

The protein resides in the mitochondrion membrane. It carries out the reaction a ubiquinone + NADH + 5 H(+)(in) = a ubiquinol + NAD(+) + 4 H(+)(out). Its function is as follows. Core subunit of the mitochondrial membrane respiratory chain NADH dehydrogenase (Complex I) that is believed to belong to the minimal assembly required for catalysis. Complex I functions in the transfer of electrons from NADH to the respiratory chain. The immediate electron acceptor for the enzyme is believed to be ubiquinone. The polypeptide is NADH-ubiquinone oxidoreductase chain 4L (mt:ND4L) (Drosophila melanogaster (Fruit fly)).